The chain runs to 595 residues: Beta-(1--&gt;2)glucan export ATP-binding/permease protein NdvA (595 aa).

The next 5 helical transmembrane spans lie at 21-41 (FLLI…EPIL), 56-76 (LVTL…YVLV), 129-149 (IWLE…VLVP), 158-178 (LSIV…LVMQ), and 252-272 (ISIV…QLSV). The ABC transmembrane type-1 domain occupies 21-301 (FLLICTANIT…ISGFINLAVS (281 aa)). Residues 335 to 569 (IQFHHVTYEF…DGHFYKLLKA (235 aa)) enclose the ABC transporter domain. An ATP-binding site is contributed by 368–375 (GPTGAGKT).

The protein belongs to the ABC transporter superfamily. Beta-(1--&gt;2)glucan exporter (TC 3.A.1.108.1) family. In terms of assembly, homodimer.

It localises to the cell inner membrane. The enzyme catalyses [(1-&gt;2)-beta-D-glucosyl](n)(in) + ATP + H2O = [(1-&gt;2)-beta-D-glucosyl](n)(out) + ADP + phosphate + H(+). Functionally, involved in beta-(1--&gt;2)glucan export. Transmembrane domains (TMD) form a pore in the inner membrane and the ATP-binding domain (NBD) is responsible for energy generation. The sequence is that of Beta-(1--&gt;2)glucan export ATP-binding/permease protein NdvA from Bartonella bacilliformis (strain ATCC 35685 / KC583 / Herrer 020/F12,63).